Consider the following 179-residue polypeptide: Large ribosomal subunit protein uL5 (179 aa).

Belongs to the universal ribosomal protein uL5 family. Part of the 50S ribosomal subunit; part of the 5S rRNA/L5/L18/L25 subcomplex. Contacts the 5S rRNA and the P site tRNA. Forms a bridge to the 30S subunit in the 70S ribosome.

This is one of the proteins that bind and probably mediate the attachment of the 5S RNA into the large ribosomal subunit, where it forms part of the central protuberance. In the 70S ribosome it contacts protein S13 of the 30S subunit (bridge B1b), connecting the 2 subunits; this bridge is implicated in subunit movement. Contacts the P site tRNA; the 5S rRNA and some of its associated proteins might help stabilize positioning of ribosome-bound tRNAs. In Aromatoleum aromaticum (strain DSM 19018 / LMG 30748 / EbN1) (Azoarcus sp. (strain EbN1)), this protein is Large ribosomal subunit protein uL5.